A 31-amino-acid polypeptide reads, in one-letter code: Cyclotide mden-N (31 aa).

The segment at residues 1 to 31 is a cross-link (cyclopeptide (Gly-Asn)); that stretch reads GTIPCGESCVYIPCLTSALGCSCKNKVCYRN. Disulfide bonds link Cys5-Cys21, Cys9-Cys23, and Cys14-Cys28.

It belongs to the cyclotide family. Bracelet subfamily. In terms of processing, this is a cyclic peptide.

Functionally, probably participates in a plant defense mechanism. This is Cyclotide mden-N from Melicytus dentatus (Tree violet).